The primary structure comprises 352 residues: Photosystem II D2 protein (352 aa).

Threonine 2 bears the N-acetylthreonine mark. Residue threonine 2 is modified to Phosphothreonine. Residues 40 to 60 (CAYFAVGGWLTGTTFVTSWYT) traverse the membrane as a helical segment. A chlorophyll a-binding site is contributed by histidine 117. The chain crosses the membrane as a helical span at residues 124 to 140 (GFMLRQFEIARAIGLRP). Residues glutamine 129 and asparagine 142 each coordinate pheophytin a. The helical transmembrane segment at 152 to 165 (VFVSVFLIYPLGQS) threads the bilayer. Histidine 197 is a chlorophyll a binding site. A helical membrane pass occupies residues 207–227 (AALLCAIHGATVENTLFEDGD). 2 residues coordinate a plastoquinone: histidine 214 and phenylalanine 261. Residue histidine 214 coordinates Fe cation. Histidine 268 is a Fe cation binding site. The helical transmembrane segment at 278-294 (GLWMSAIGVVGLALNLR) threads the bilayer.

This sequence belongs to the reaction center PufL/M/PsbA/D family. In terms of assembly, PSII is composed of 1 copy each of membrane proteins PsbA, PsbB, PsbC, PsbD, PsbE, PsbF, PsbH, PsbI, PsbJ, PsbK, PsbL, PsbM, PsbT, PsbX, PsbY, PsbZ, Psb30/Ycf12, at least 3 peripheral proteins of the oxygen-evolving complex and a large number of cofactors. It forms dimeric complexes. The cofactor is The D1/D2 heterodimer binds P680, chlorophylls that are the primary electron donor of PSII, and subsequent electron acceptors. It shares a non-heme iron and each subunit binds pheophytin, quinone, additional chlorophylls, carotenoids and lipids. There is also a Cl(-1) ion associated with D1 and D2, which is required for oxygen evolution. The PSII complex binds additional chlorophylls, carotenoids and specific lipids..

Its subcellular location is the plastid. It is found in the chloroplast thylakoid membrane. The catalysed reaction is 2 a plastoquinone + 4 hnu + 2 H2O = 2 a plastoquinol + O2. In terms of biological role, photosystem II (PSII) is a light-driven water:plastoquinone oxidoreductase that uses light energy to abstract electrons from H(2)O, generating O(2) and a proton gradient subsequently used for ATP formation. It consists of a core antenna complex that captures photons, and an electron transfer chain that converts photonic excitation into a charge separation. The D1/D2 (PsbA/PsbD) reaction center heterodimer binds P680, the primary electron donor of PSII as well as several subsequent electron acceptors. D2 is needed for assembly of a stable PSII complex. This chain is Photosystem II D2 protein, found in Nephroselmis olivacea (Green alga).